The primary structure comprises 193 residues: Cell wall galactomannoprotein (193 aa).

An N-terminal signal peptide occupies residues 1-17; that stretch reads MFFRILALLPLVFLVTA. Residues Asn38 and Asn173 are each glycosylated (N-linked (GlcNAc...) asparagine).

This sequence belongs to the cell wall mannoprotein 1 family. In terms of processing, galactomannoprotein, glycosylated.

The protein localises to the secreted. It is found in the cell wall. Its function is as follows. Constitutive protein of the cell wall. This is Cell wall galactomannoprotein from Armillaria ostoyae (Armillaria root rot fungus).